The sequence spans 449 residues: MDSSVTTGRSGIGTGQGSPAASGQPISKAGQAIPNLRDRIPKLEPRRRKQEPSNPTPVPETPALPPRPDPSTLVFQTPVRRILLLKDHELFLASPSFNLILSFVFSLSESVADTPISAIKDSDLSEPVKAILRILDETEALCKESPPDDQGGSRFGNKTFRLFLDKVKQRGHQWHAAFLGGKLPDAAVTEASAYLNQSFGNRTRIDYGSGHELNFIMWLLCLYQLSVLEQSDFKAVVLRVFARYLEVMRLIQMTYYLEPAGSHGVWGLDDYQFLPFLFGASQLLHHHFITPRAIHQELTLEEFGHDFLYLGQVAFVNSTKTVKGLRWHSPMLDDISSAKNWEKIEGGMRRMFVSEVLKKLPVMQHFLFGSLIPAAEGMSEQDPNALGSEENEEEGGEVEVYDDSDGKRHVHQPTGWGDCCGIKVPSSLAAAEEMRKRGQVESLRRIPFD.

2 disordered regions span residues 1 to 72 and 378 to 416; these read MDSS…DPST and MSEQ…PTGW. The segment covering 54–69 has biased composition (pro residues); sequence NPTPVPETPALPPRPD. A compositionally biased stretch (acidic residues) spans 389-403; the sequence is EENEEEGGEVEVYDD.

It belongs to the PTPA-type PPIase family.

Its subcellular location is the cytoplasm. It catalyses the reaction [protein]-peptidylproline (omega=180) = [protein]-peptidylproline (omega=0). Its function is as follows. PPIases accelerate the folding of proteins. It catalyzes the cis-trans isomerization of proline imidic peptide bonds in oligopeptides. Acts as a regulatory subunit for PP2A-like phosphatases modulating their activity or substrate specificity, probably by inducing a conformational change in the catalytic subunit, a direct target of the PPIase. Can reactivate inactive phosphatase PP2A-phosphatase methylesterase complexes (PP2Ai) in presence of ATP and Mg(2+) by dissociating the inactive form from the complex. This Neurospora crassa (strain ATCC 24698 / 74-OR23-1A / CBS 708.71 / DSM 1257 / FGSC 987) protein is Serine/threonine-protein phosphatase 2A activator 2 (rrd-2).